We begin with the raw amino-acid sequence, 221 residues long: Protein-L-isoaspartate O-methyltransferase (221 aa).

Residue Ser-70 is part of the active site.

It belongs to the methyltransferase superfamily. L-isoaspartyl/D-aspartyl protein methyltransferase family.

The protein localises to the cytoplasm. The catalysed reaction is [protein]-L-isoaspartate + S-adenosyl-L-methionine = [protein]-L-isoaspartate alpha-methyl ester + S-adenosyl-L-homocysteine. Its function is as follows. Catalyzes the methyl esterification of L-isoaspartyl residues in peptides and proteins that result from spontaneous decomposition of normal L-aspartyl and L-asparaginyl residues. It plays a role in the repair and/or degradation of damaged proteins. In Alkalilimnicola ehrlichii (strain ATCC BAA-1101 / DSM 17681 / MLHE-1), this protein is Protein-L-isoaspartate O-methyltransferase.